A 308-amino-acid polypeptide reads, in one-letter code: Cilia- and flagella-associated protein 73 (308 aa).

Coiled coils occupy residues 34-143 and 175-233; these read RLLE…LEPC and AALR…WESK.

It belongs to the CFAP73 family.

The protein resides in the cytoplasm. It is found in the cytoskeleton. Its subcellular location is the cilium axoneme. Its function is as follows. May play a role in ciliary/flagellar motility by regulating the assembly and the activity of axonemal inner dynein arm. The polypeptide is Cilia- and flagella-associated protein 73 (Homo sapiens (Human)).